The primary structure comprises 249 residues: 5'-nucleotidase SurE (249 aa).

Residues Asp8, Asp9, Ser39, and Asn91 each coordinate a divalent metal cation.

The protein belongs to the SurE nucleotidase family. The cofactor is a divalent metal cation.

It is found in the cytoplasm. The catalysed reaction is a ribonucleoside 5'-phosphate + H2O = a ribonucleoside + phosphate. Nucleotidase that shows phosphatase activity on nucleoside 5'-monophosphates. The polypeptide is 5'-nucleotidase SurE (Pseudomonas syringae pv. syringae (strain B728a)).